Consider the following 388-residue polypeptide: Homeobox protein Hox-A13 (388 aa).

Positions 322 to 381 form a DNA-binding region, homeobox; the sequence is GRKKRVPYTKVQLKELEREYATNKFITKDKRRRISATTNLSERQVTIWFQNRRVKEKKVI.

This sequence belongs to the Abd-B homeobox family. As to quaternary structure, binds DNA as a homodimer. Interacts with MEIS1, MEIS2 and MEIS3.

The protein resides in the nucleus. Its function is as follows. Sequence-specific, AT-rich binding transcription factor which is part of a developmental regulatory system that provides cells with specific positional identities on the anterior-posterior axis. In terms of biological role, sequence-specific transcription factor which is part of a developmental regulatory system that provides cells with specific positional identities on the anterior-posterior axis. This Homo sapiens (Human) protein is Homeobox protein Hox-A13 (HOXA13).